Consider the following 149-residue polypeptide: D-aminoacyl-tRNA deacylase (149 aa).

The Gly-cisPro motif, important for rejection of L-amino acids motif lies at 137–138 (GP).

The protein belongs to the DTD family. In terms of assembly, homodimer.

The protein localises to the cytoplasm. The catalysed reaction is glycyl-tRNA(Ala) + H2O = tRNA(Ala) + glycine + H(+). It catalyses the reaction a D-aminoacyl-tRNA + H2O = a tRNA + a D-alpha-amino acid + H(+). An aminoacyl-tRNA editing enzyme that deacylates mischarged D-aminoacyl-tRNAs. Also deacylates mischarged glycyl-tRNA(Ala), protecting cells against glycine mischarging by AlaRS. Acts via tRNA-based rather than protein-based catalysis; rejects L-amino acids rather than detecting D-amino acids in the active site. By recycling D-aminoacyl-tRNA to D-amino acids and free tRNA molecules, this enzyme counteracts the toxicity associated with the formation of D-aminoacyl-tRNA entities in vivo and helps enforce protein L-homochirality. This is D-aminoacyl-tRNA deacylase from Clostridium tetani (strain Massachusetts / E88).